The chain runs to 186 residues: Protein GrpE (186 aa).

Basic and acidic residues predominate over residues 1-17 (MKDEHNQEHDLSQKELE). The tract at residues 1–32 (MKDEHNQEHDLSQKELESCENSCTCEGKKQEA) is disordered.

This sequence belongs to the GrpE family. In terms of assembly, homodimer.

It localises to the cytoplasm. Participates actively in the response to hyperosmotic and heat shock by preventing the aggregation of stress-denatured proteins, in association with DnaK and GrpE. It is the nucleotide exchange factor for DnaK and may function as a thermosensor. Unfolded proteins bind initially to DnaJ; upon interaction with the DnaJ-bound protein, DnaK hydrolyzes its bound ATP, resulting in the formation of a stable complex. GrpE releases ADP from DnaK; ATP binding to DnaK triggers the release of the substrate protein, thus completing the reaction cycle. Several rounds of ATP-dependent interactions between DnaJ, DnaK and GrpE are required for fully efficient folding. This Helicobacter acinonychis (strain Sheeba) protein is Protein GrpE.